A 185-amino-acid polypeptide reads, in one-letter code: uncharacterized protein (185 aa).

This is an uncharacterized protein from Methanocaldococcus jannaschii (strain ATCC 43067 / DSM 2661 / JAL-1 / JCM 10045 / NBRC 100440) (Methanococcus jannaschii).